An 80-amino-acid polypeptide reads, in one-letter code: UPF0346 protein LSEI_1394 (80 aa).

The protein belongs to the UPF0346 family.

The protein is UPF0346 protein LSEI_1394 of Lacticaseibacillus paracasei (strain ATCC 334 / BCRC 17002 / CCUG 31169 / CIP 107868 / KCTC 3260 / NRRL B-441) (Lactobacillus paracasei).